Reading from the N-terminus, the 161-residue chain is General odorant-binding protein 2 (161 aa).

The N-terminal stretch at 1–20 is a signal peptide; it reads MVNRLILMVVVVFITDSVMG. Disulfide bonds link Cys39-Cys74, Cys70-Cys128, and Cys117-Cys137.

Belongs to the PBP/GOBP family. As to quaternary structure, homodimer. In terms of tissue distribution, olfactory tissue; expressed by the glia-like support cells that ensheathe the sensory neurons and line the base of the sensillum lumen.

Functionally, present in the aqueous fluid surrounding olfactory sensory dendrites and are thought to aid in the capture and transport of hydrophobic odorants into and through this fluid. The polypeptide is General odorant-binding protein 2 (GOBP2) (Manduca sexta (Tobacco hawkmoth)).